A 31-amino-acid polypeptide reads, in one-letter code: Photosystem II reaction center protein T (31 aa).

The chain crosses the membrane as a helical span at residues 3–23; sequence ALVYTFLLVGTLGIIFFSIFF.

It belongs to the PsbT family. As to quaternary structure, PSII is composed of 1 copy each of membrane proteins PsbA, PsbB, PsbC, PsbD, PsbE, PsbF, PsbH, PsbI, PsbJ, PsbK, PsbL, PsbM, PsbT, PsbY, PsbZ, Psb30/Ycf12, at least 3 peripheral proteins of the oxygen-evolving complex and a large number of cofactors. It forms dimeric complexes.

Its subcellular location is the plastid. The protein localises to the chloroplast thylakoid membrane. Functionally, found at the monomer-monomer interface of the photosystem II (PS II) dimer, plays a role in assembly and dimerization of PSII. PSII is a light-driven water plastoquinone oxidoreductase, using light energy to abstract electrons from H(2)O, generating a proton gradient subsequently used for ATP formation. The sequence is that of Photosystem II reaction center protein T from Tupiella akineta (Green alga).